The following is a 260-amino-acid chain: Putative ABC transporter ATP-binding protein PF0068 (260 aa).

The ABC transporter domain occupies 2-234; the sequence is IEVKGVWFWY…DLKRYKLEEP (233 aa). ATP is bound at residue 34–41; that stretch reads GPNGSGKT.

The protein belongs to the ABC transporter superfamily.

It localises to the cell membrane. Probably part of an ABC transporter complex. Responsible for energy coupling to the transport system. In Pyrococcus furiosus (strain ATCC 43587 / DSM 3638 / JCM 8422 / Vc1), this protein is Putative ABC transporter ATP-binding protein PF0068.